Consider the following 487-residue polypeptide: Probable glutamate receptor (487 aa).

The signal sequence occupies residues M1 to H23. Residues A24–K169 lie on the Extracellular side of the membrane. Residue N104 is glycosylated (N-linked (GlcNAc...) asparagine). Residues E170 to A190 form a helical membrane-spanning segment. The Cytoplasmic segment spans residues R191–R235. The helical transmembrane segment at V236–F256 threads the bilayer. Over T257–A419 the chain is Extracellular. The helical transmembrane segment at L420–V440 threads the bilayer. Over E441–A487 the chain is Cytoplasmic.

This sequence belongs to the glutamate-gated ion channel (TC 1.A.10.1) family.

Its subcellular location is the cell membrane. The protein resides in the postsynaptic cell membrane. Its function is as follows. Receptor for glutamate. L-glutamate acts as an excitatory neurotransmitter at many synapses in the central nervous system. The postsynaptic actions of Glu are mediated by a variety of receptors that are named according to their selective agonists. The sequence is that of Probable glutamate receptor (KBP) from Anas platyrhynchos (Mallard).